The primary structure comprises 288 residues: Diaminopimelate epimerase (288 aa).

3 residues coordinate substrate: Asn-13, Gln-46, and Asn-66. The active-site Proton donor is Cys-75. Substrate-binding positions include 76-77, Asn-166, Asn-199, and 217-218; these read GN and ER. The active-site Proton acceptor is the Cys-226. 227 to 228 contacts substrate; it reads GT.

It belongs to the diaminopimelate epimerase family. In terms of assembly, homodimer.

The protein resides in the cytoplasm. The enzyme catalyses (2S,6S)-2,6-diaminopimelate = meso-2,6-diaminopimelate. It functions in the pathway amino-acid biosynthesis; L-lysine biosynthesis via DAP pathway; DL-2,6-diaminopimelate from LL-2,6-diaminopimelate: step 1/1. Catalyzes the stereoinversion of LL-2,6-diaminopimelate (L,L-DAP) to meso-diaminopimelate (meso-DAP), a precursor of L-lysine and an essential component of the bacterial peptidoglycan. This is Diaminopimelate epimerase from Cupriavidus metallidurans (strain ATCC 43123 / DSM 2839 / NBRC 102507 / CH34) (Ralstonia metallidurans).